Reading from the N-terminus, the 310-residue chain is Thiamine-monophosphate kinase (310 aa).

Mg(2+)-binding residues include Asp26, Thr40, Ser41, and Asp42. Residue Asp49 coordinates substrate. The Mg(2+) site is built by Asp70 and Asp118. Residues 117–118 and Arg141 contribute to the ATP site; that span reads GD. Residue Asp202 participates in Mg(2+) binding. Ser204 serves as a coordination point for ATP. Asp205 provides a ligand contact to Mg(2+). The substrate site is built by Glu251 and Trp299.

This sequence belongs to the thiamine-monophosphate kinase family.

The enzyme catalyses thiamine phosphate + ATP = thiamine diphosphate + ADP. The protein operates within cofactor biosynthesis; thiamine diphosphate biosynthesis; thiamine diphosphate from thiamine phosphate: step 1/1. Functionally, catalyzes the ATP-dependent phosphorylation of thiamine-monophosphate (TMP) to form thiamine-pyrophosphate (TPP), the active form of vitamin B1. The sequence is that of Thiamine-monophosphate kinase from Pyrococcus abyssi (strain GE5 / Orsay).